Reading from the N-terminus, the 1073-residue chain is Receptor-type guanylate cyclase gcy-23 (1073 aa).

An N-terminal signal peptide occupies residues 1-15 (MRRELFIFLLLLGEC). Over 16–458 (ANVKVKVGHI…FRNEKCDYTT (443 aa)) the chain is Extracellular. Asparagine 336 carries N-linked (GlcNAc...) asparagine glycosylation. A helical transmembrane segment spans residues 459 to 479 (LIIGGCIVLLIILLIICFFIL). The Cytoplasmic segment spans residues 480 to 1073 (SRVCENRALA…QQQNFSQLGI (594 aa)). One can recognise a Protein kinase domain in the interval 508–808 (MKSMLSIGSS…RVRLNTENYL (301 aa)). The stretch at 813–844 (SLVDQMMRMMEQYANNLEKLVAERTGMLEEAN) forms a coiled coil. The 131-residue stretch at 878–1008 (TVMFSDIVGF…DTVNVASRME (131 aa)) folds into the Guanylate cyclase domain. Mg(2+) is bound by residues aspartate 883, isoleucine 884, and aspartate 927.

Belongs to the adenylyl cyclase class-4/guanylyl cyclase family. As to expression, expressed specifically in AFD sensory neurons.

The protein localises to the cell membrane. It is found in the cell projection. The protein resides in the cilium. The catalysed reaction is GTP = 3',5'-cyclic GMP + diphosphate. Functionally, guanylate cyclase involved in the production of the second messenger cGMP. Regulates thermotaxis responses in AFD sensory neurons. May regulate AFD neuronal activity such as calcium responses to temperature gradients. This is Receptor-type guanylate cyclase gcy-23 from Caenorhabditis elegans.